The chain runs to 138 residues: Urease subunit beta (138 aa).

The interval 115–138 (RMRAAGFGDTGEAAPDDGDTESDQ) is disordered. Residues 128 to 138 (APDDGDTESDQ) are compositionally biased toward acidic residues.

It belongs to the urease beta subunit family. As to quaternary structure, heterotrimer of UreA (gamma), UreB (beta) and UreC (alpha) subunits. Three heterotrimers associate to form the active enzyme.

It is found in the cytoplasm. The catalysed reaction is urea + 2 H2O + H(+) = hydrogencarbonate + 2 NH4(+). It functions in the pathway nitrogen metabolism; urea degradation; CO(2) and NH(3) from urea (urease route): step 1/1. This Haloarcula marismortui (strain ATCC 43049 / DSM 3752 / JCM 8966 / VKM B-1809) (Halobacterium marismortui) protein is Urease subunit beta.